The sequence spans 288 residues: Diaminopimelate epimerase (288 aa).

Substrate is bound by residues asparagine 14 and asparagine 67. Cysteine 76 serves as the catalytic Proton donor. Substrate-binding positions include 77 to 78 (GN), asparagine 166, asparagine 199, and 217 to 218 (ER). Cysteine 226 acts as the Proton acceptor in catalysis. Substrate is bound at residue 227-228 (GT).

Belongs to the diaminopimelate epimerase family. In terms of assembly, homodimer.

It is found in the cytoplasm. The catalysed reaction is (2S,6S)-2,6-diaminopimelate = meso-2,6-diaminopimelate. Its pathway is amino-acid biosynthesis; L-lysine biosynthesis via DAP pathway; DL-2,6-diaminopimelate from LL-2,6-diaminopimelate: step 1/1. Functionally, catalyzes the stereoinversion of LL-2,6-diaminopimelate (L,L-DAP) to meso-diaminopimelate (meso-DAP), a precursor of L-lysine and an essential component of the bacterial peptidoglycan. The sequence is that of Diaminopimelate epimerase from Bacillus cytotoxicus (strain DSM 22905 / CIP 110041 / 391-98 / NVH 391-98).